We begin with the raw amino-acid sequence, 305 residues long: UDP-3-O-acyl-N-acetylglucosamine deacetylase (305 aa).

3 residues coordinate Zn(2+): His79, His238, and Asp242. Residue His265 is the Proton donor of the active site.

The protein belongs to the LpxC family. It depends on Zn(2+) as a cofactor.

It catalyses the reaction a UDP-3-O-[(3R)-3-hydroxyacyl]-N-acetyl-alpha-D-glucosamine + H2O = a UDP-3-O-[(3R)-3-hydroxyacyl]-alpha-D-glucosamine + acetate. The protein operates within glycolipid biosynthesis; lipid IV(A) biosynthesis; lipid IV(A) from (3R)-3-hydroxytetradecanoyl-[acyl-carrier-protein] and UDP-N-acetyl-alpha-D-glucosamine: step 2/6. Catalyzes the hydrolysis of UDP-3-O-myristoyl-N-acetylglucosamine to form UDP-3-O-myristoylglucosamine and acetate, the committed step in lipid A biosynthesis. The polypeptide is UDP-3-O-acyl-N-acetylglucosamine deacetylase (Aliivibrio fischeri (strain ATCC 700601 / ES114) (Vibrio fischeri)).